Consider the following 226-residue polypeptide: Glutathione peroxidase 3 (226 aa).

A signal peptide spans 1–24 (MARLLQASCLLSLLLAGFVPQSRG). U73 is a catalytic residue. Position 73 (U73) is a non-standard amino acid, selenocysteine.

This sequence belongs to the glutathione peroxidase family. As to quaternary structure, homotetramer. Secreted in plasma.

It localises to the secreted. The catalysed reaction is 2 glutathione + H2O2 = glutathione disulfide + 2 H2O. The enzyme catalyses tert-butyl hydroperoxide + 2 glutathione = tert-butanol + glutathione disulfide + H2O. Functionally, protects cells and enzymes from oxidative damage, by catalyzing the reduction of hydrogen peroxide, lipid peroxides and organic hydroperoxide, by glutathione. In Hylobates lar (Lar gibbon), this protein is Glutathione peroxidase 3.